Consider the following 347-residue polypeptide: 3-keto-steroid reductase ERG27 (347 aa).

3 residues coordinate NADP(+): leucine 15, threonine 38, and arginine 44. Residues serine 179 and tyrosine 202 each act as proton donor in the active site. Residues tyrosine 202, lysine 206, and serine 237 each contribute to the NADP(+) site. Lysine 206 serves as the catalytic Lowers pKa of active site Tyr. Threonine 345 carries the phosphothreonine modification.

This sequence belongs to the short-chain dehydrogenases/reductases (SDR) family. ERG27 subfamily. In terms of assembly, heterotetramer of ERG25, ERG26, ERG27 and ERG28. ERG28 acts as a scaffold to tether ERG27 and other 4,4-demethylation-related enzymes, forming a demethylation enzyme complex, in the endoplasmic reticulum. Interacts with ERG25 and ERG28. Also interacts with ERG7, but only in lipid particles.

The protein localises to the endoplasmic reticulum membrane. It is found in the lipid droplet. The enzyme catalyses 3-dehydro-4alpha-methylzymosterol + NADPH + H(+) = 4alpha-methylzymosterol + NADP(+). It functions in the pathway steroid biosynthesis; zymosterol biosynthesis; zymosterol from lanosterol: step 5/6. In terms of biological role, 3-keto-steroid reductase; part of the third module of ergosterol biosynthesis pathway that includes the late steps of the pathway. ERG27 is a catalytic component of the C-4 demethylation complex that catalyze the reduction of the keto group on the C-3. The third module or late pathway involves the ergosterol synthesis itself through consecutive reactions that mainly occur in the endoplasmic reticulum (ER) membrane. Firstly, the squalene synthase ERG9 catalyzes the condensation of 2 farnesyl pyrophosphate moieties to form squalene, which is the precursor of all steroids. Squalene synthase is crucial for balancing the incorporation of farnesyl diphosphate (FPP) into sterol and nonsterol isoprene synthesis. Secondly, the squalene epoxidase ERG1 catalyzes the stereospecific oxidation of squalene to (S)-2,3-epoxysqualene, which is considered to be a rate-limiting enzyme in steroid biosynthesis. Then, the lanosterol synthase ERG7 catalyzes the cyclization of (S)-2,3 oxidosqualene to lanosterol, a reaction that forms the sterol core. In the next steps, lanosterol is transformed to zymosterol through a complex process involving various demethylation, reduction and desaturation reactions. The lanosterol 14-alpha-demethylase ERG11 (also known as CYP51) catalyzes C14-demethylation of lanosterol to produce 4,4'-dimethyl cholesta-8,14,24-triene-3-beta-ol, which is critical for ergosterol biosynthesis. The C-14 reductase ERG24 reduces the C14=C15 double bond of 4,4-dimethyl-cholesta-8,14,24-trienol to produce 4,4-dimethyl-cholesta-8,24-dienol. 4,4-dimethyl-cholesta-8,24-dienol is substrate of the C-4 demethylation complex ERG25-ERG26-ERG27 in which ERG25 catalyzes the three-step monooxygenation required for the demethylation of 4,4-dimethyl and 4alpha-methylsterols, ERG26 catalyzes the oxidative decarboxylation that results in a reduction of the 3-beta-hydroxy group at the C-3 carbon to an oxo group, and ERG27 is responsible for the reduction of the keto group on the C-3. ERG28 has a role as a scaffold to help anchor ERG25, ERG26 and ERG27 to the endoplasmic reticulum and ERG29 regulates the activity of the iron-containing C4-methylsterol oxidase ERG25. Then, the sterol 24-C-methyltransferase ERG6 catalyzes the methyl transfer from S-adenosyl-methionine to the C-24 of zymosterol to form fecosterol. The C-8 sterol isomerase ERG2 catalyzes the reaction which results in unsaturation at C-7 in the B ring of sterols and thus converts fecosterol to episterol. The sterol-C5-desaturase ERG3 then catalyzes the introduction of a C-5 double bond in the B ring to produce 5-dehydroepisterol. The C-22 sterol desaturase ERG5 further converts 5-dehydroepisterol into ergosta-5,7,22,24(28)-tetraen-3beta-ol by forming the C-22(23) double bond in the sterol side chain. Finally, ergosta-5,7,22,24(28)-tetraen-3beta-ol is substrate of the C-24(28) sterol reductase ERG4 to produce ergosterol. Facilitates the association of ERG7 with lipid particles preventing its digestion in the endoplasmic reticulum and the lipid particles. The chain is 3-keto-steroid reductase ERG27 from Saccharomyces cerevisiae (strain ATCC 204508 / S288c) (Baker's yeast).